The primary structure comprises 278 residues: HTH-type transcriptional activator RhaS (278 aa).

An HTH araC/xylS-type domain is found at 174–272 (NQLMAWLEDH…NWSPRDIRQG (99 aa)). DNA-binding regions (H-T-H motif) lie at residues 191-212 (EAVA…KQHT) and 239-262 (VTEI…RREF).

Binds DNA as a dimer.

It is found in the cytoplasm. Functionally, activates expression of the rhaBAD and rhaT operons. The polypeptide is HTH-type transcriptional activator RhaS (Salmonella enteritidis PT4 (strain P125109)).